The following is a 218-amino-acid chain: Cytidylate kinase (218 aa).

Position 7–15 (7–15) interacts with ATP; the sequence is GPSASGKSS.

The protein belongs to the cytidylate kinase family. Type 1 subfamily.

The protein resides in the cytoplasm. It catalyses the reaction CMP + ATP = CDP + ADP. The catalysed reaction is dCMP + ATP = dCDP + ADP. The chain is Cytidylate kinase from Borrelia duttonii (strain Ly).